The sequence spans 1088 residues: Protein unc-13 homolog D (1088 aa).

Residues 26-46 form a disordered region; it reads VRDLQDPPPQATPEVQVQSHH. Residues 92–239 enclose the C2 1 domain; that stretch reads QPEEHQQMLQ…FKEARKDKGQ (148 aa). Residues aspartate 127 and aspartate 133 each coordinate Ca(2+). Serine 150 is subject to Phosphoserine. Positions 206 and 208 each coordinate Ca(2+). The segment at 240–543 is interaction with RAB27A; it reads DDFLGNVMLR…AKRVQDHTAA (304 aa). An MHD1 domain is found at 557–675; sequence FQLYVSLREF…RLALVYCSLI (119 aa). The region spanning 786–893 is the MHD2 domain; the sequence is EDAILPLMKF…ASSRELIQKY (108 aa). The C2 2 domain maps to 908-1033; it reads RLGAVTVKAS…PGLTGCVEPG (126 aa). Positions 938, 939, 945, 1003, 1005, and 1011 each coordinate Ca(2+).

It belongs to the unc-13 family. Interacts with RAB27A and DOC2A. Interacts with RhoG; the interaction increases RhoG affinity to the membrane lipids, targets Unc13d to membrane lipids and facilitates cytotoxic granule (CG) docking to the plasma membrane. It depends on Ca(2+) as a cofactor. In terms of tissue distribution, expressed in lung bronchial epithelium goblet/mucous cells. Also expressed in spleen and testis. Expressed at very low levels in heart muscle, kidney, liver, brain and skeletal muscle.

It localises to the cytoplasm. Its subcellular location is the membrane. The protein resides in the late endosome. The protein localises to the recycling endosome. It is found in the lysosome. Its function is as follows. Plays a role in cytotoxic granule exocytosis in lymphocytes. Required for both granule maturation and granule docking and priming at the immunologic synapse. Regulates assembly of recycling and late endosomal structures, leading to the formation of an endosomal exocytic compartment that fuses with perforin-containing granules at the immunologic synapse and licences them for exocytosis. Regulates Ca(2+)-dependent secretory lysosome exocytosis in mast cells. This chain is Protein unc-13 homolog D (Unc13d), found in Rattus norvegicus (Rat).